The sequence spans 717 residues: Polyribonucleotide nucleotidyltransferase (717 aa).

Aspartate 496 and aspartate 502 together coordinate Mg(2+). The region spanning 563-622 (PRLLSFKIDPEMIGLVIGPGGKTIKGITEETGVKIDIDDDGTVTIAAADGEKAKQACNII) is the KH domain. The 69-residue stretch at 632 to 700 (GDVYVGRVTR…SKGRVNLTRL (69 aa)) folds into the S1 motif domain.

It belongs to the polyribonucleotide nucleotidyltransferase family. It depends on Mg(2+) as a cofactor.

It is found in the cytoplasm. The catalysed reaction is RNA(n+1) + phosphate = RNA(n) + a ribonucleoside 5'-diphosphate. In terms of biological role, involved in mRNA degradation. Catalyzes the phosphorolysis of single-stranded polyribonucleotides processively in the 3'- to 5'-direction. The chain is Polyribonucleotide nucleotidyltransferase from Trichodesmium erythraeum (strain IMS101).